Reading from the N-terminus, the 190-residue chain is Elongation factor P-like protein (190 aa).

This sequence belongs to the elongation factor P family.

The chain is Elongation factor P-like protein from Pectobacterium carotovorum subsp. carotovorum (strain PC1).